The primary structure comprises 380 residues: Cytochrome b (380 aa).

4 consecutive transmembrane segments (helical) span residues 34–54 (FGSL…LLAA), 78–99 (WLIR…YLHI), 114–134 (WNTG…GYVL), and 179–199 (FFTL…IHLT). Heme b-binding residues include H84 and H98. Heme b is bound by residues H183 and H197. Residue H202 participates in a ubiquinone binding. Transmembrane regions (helical) follow at residues 227–247 (LKDI…ALFS), 289–309 (LGGV…PLLH), 321–341 (FSQL…WVGS), and 348–368 (FIII…ILFP).

It belongs to the cytochrome b family. The cytochrome bc1 complex contains 11 subunits: 3 respiratory subunits (MT-CYB, CYC1 and UQCRFS1), 2 core proteins (UQCRC1 and UQCRC2) and 6 low-molecular weight proteins (UQCRH/QCR6, UQCRB/QCR7, UQCRQ/QCR8, UQCR10/QCR9, UQCR11/QCR10 and a cleavage product of UQCRFS1). This cytochrome bc1 complex then forms a dimer. It depends on heme b as a cofactor.

The protein localises to the mitochondrion inner membrane. Its function is as follows. Component of the ubiquinol-cytochrome c reductase complex (complex III or cytochrome b-c1 complex) that is part of the mitochondrial respiratory chain. The b-c1 complex mediates electron transfer from ubiquinol to cytochrome c. Contributes to the generation of a proton gradient across the mitochondrial membrane that is then used for ATP synthesis. This chain is Cytochrome b (MT-CYB), found in Antigone rubicunda (Brolga crane).